An 83-amino-acid chain; its full sequence is uncharacterized protein (83 aa).

This is an uncharacterized protein from Acidianus bottle-shaped virus (isolate Italy/Pozzuoli) (ABV).